Consider the following 128-residue polypeptide: RYamide neuropeptides (128 aa).

The N-terminal stretch at 1–23 (MHARKLIVVLVYILTVLVSVAVS) is a signal peptide. The propeptide occupies 26-29 (YTSE). Y44 bears the Tyrosine amide mark. The propeptide occupies 47-63 (GGPSPNNKENKVNIRPR). Residue Y73 is modified to Tyrosine amide. Positions 77–128 (SGWSPNASLVYPVSTPLCGLDEDLSCAYTGISDLYRCTPRKGESEEFTTSSN) are excised as a propeptide.

It is found in the secreted. Neuropeptides RYamide-1 and RYamide-2 are ligands for the G-protein coupled receptor RYa-R. RYamide-2 is the most potent activator of RYa-R. The polypeptide is RYamide neuropeptides (Tribolium castaneum (Red flour beetle)).